Consider the following 430-residue polypeptide: Aspartate aminotransferase, mitochondrial (430 aa).

Residues 1–29 (MALLHSGRVLSGIAAAFHPGLAAAASARA) constitute a mitochondrion transit peptide. Residue Thr48 is modified to Phosphothreonine. Lys59 is modified (N6-acetyllysine). Residue Gly65 participates in substrate binding. An N6-acetyllysine; alternate modification is found at Lys73. The residue at position 73 (Lys73) is an N6-succinyllysine; alternate. Lys82 is modified (N6-acetyllysine). Lys90 carries the N6-acetyllysine; alternate modification. At Lys90 the chain carries N6-succinyllysine; alternate. 3'-nitrotyrosine; alternate is present on Tyr96. Tyr96 is modified (phosphotyrosine; alternate). Lys107 and Lys122 each carry N6-acetyllysine; alternate. An N6-succinyllysine; alternate mark is found at Lys107 and Lys122. Ser143 carries the phosphoserine modification. Lys159 carries the post-translational modification N6-acetyllysine; alternate. N6-succinyllysine; alternate is present on Lys159. Residue Trp162 participates in substrate binding. Lys185 carries the N6-acetyllysine; alternate modification. An N6-succinyllysine; alternate modification is found at Lys185. Asn215 contacts substrate. Lys227 is subject to N6-succinyllysine. Lys234 is modified (N6-acetyllysine). Residues Lys279 and Lys296 each carry the N6-acetyllysine; alternate modification. Lys279 is modified (N6-(pyridoxal phosphate)lysine; alternate). An N6-succinyllysine; alternate modification is found at Lys296. An N6-acetyllysine modification is found at Lys302. Residue Lys309 is modified to N6-acetyllysine; alternate. Lys309 is modified (N6-succinyllysine; alternate). The residue at position 313 (Arg313) is an Asymmetric dimethylarginine. Thr333 bears the Phosphothreonine mark. Lys338 bears the N6-acetyllysine; alternate mark. Lys338 bears the N6-succinyllysine; alternate mark. The residue at position 345 (Lys345) is an N6-acetyllysine. Lys363 is subject to N6-acetyllysine; alternate. Lys363 is subject to N6-succinyllysine; alternate. Residues Lys364 and Lys387 each carry the N6-acetyllysine modification. N6-acetyllysine; alternate occurs at positions 396 and 404. An N6-succinyllysine; alternate mark is found at Lys396 and Lys404. Arg407 contributes to the substrate binding site.

This sequence belongs to the class-I pyridoxal-phosphate-dependent aminotransferase family. As to quaternary structure, homodimer. Pyridoxal 5'-phosphate is required as a cofactor.

The protein resides in the mitochondrion matrix. The protein localises to the cell membrane. It carries out the reaction L-aspartate + 2-oxoglutarate = oxaloacetate + L-glutamate. The enzyme catalyses L-kynurenine + 2-oxoglutarate = kynurenate + L-glutamate + H2O. Its function is as follows. Catalyzes the irreversible transamination of the L-tryptophan metabolite L-kynurenine to form kynurenic acid (KA). As a member of the malate-aspartate shuttle, it has a key role in the intracellular NAD(H) redox balance. Is important for metabolite exchange between mitochondria and cytosol, and for amino acid metabolism. Facilitates cellular uptake of long-chain free fatty acids. The polypeptide is Aspartate aminotransferase, mitochondrial (GOT2) (Macaca fascicularis (Crab-eating macaque)).